Consider the following 273-residue polypeptide: MDFLIVLKALMMGLVEGFTEFLPISSTGHLIVFGNLIGFHSNHKVFEIAIQLGAVLAVVFEYRQRFSNVLHGVGKDRKANRFVLNLAIAFIPAAVMGLLFGKQIKEHLFNPLSVAVMLVLGGLFILWVEKRQSWAEPKIADVDALRPIDALMIGVAQVFALIPGTSRSGSTIMGGMLWGIERKTATEFSFFLAVPMMVAATAYDVLKHYRFFTLHDVGLILIGFVAAFVSGLVAVKALLRFVSKKNYIPFAYYRIVFGIAIIILWLSGWISWE.

8 helical membrane passes run 13-35 (GLVEGFTEFLPISSTGHLIVFGN), 45-62 (VFEIAIQLGAVLAVVFEY), 82-102 (FVLNLAIAFIPAAVMGLLFGK), 108-128 (LFNPLSVAVMLVLGGLFILWV), 144-164 (ALRPIDALMIGVAQVFALIPG), 186-206 (TEFSFFLAVPMMVAATAYDVL), 219-239 (LILIGFVAAFVSGLVAVKALL), and 250-270 (FAYYRIVFGIAIIILWLSGWI).

This sequence belongs to the UppP family.

The protein resides in the cell inner membrane. It carries out the reaction di-trans,octa-cis-undecaprenyl diphosphate + H2O = di-trans,octa-cis-undecaprenyl phosphate + phosphate + H(+). Functionally, catalyzes the dephosphorylation of undecaprenyl diphosphate (UPP). Confers resistance to bacitracin. This Neisseria meningitidis serogroup C (strain 053442) protein is Undecaprenyl-diphosphatase.